The following is a 282-amino-acid chain: Shikimate dehydrogenase (NADP(+)) (282 aa).

Shikimate is bound by residues 15–17 and T62; that span reads SKS. K66 functions as the Proton acceptor in the catalytic mechanism. Shikimate is bound by residues N87 and D103. NADP(+)-binding positions include 127-131, 151-156, and M220; these read GAGGA and NRTHTK. Y222 provides a ligand contact to shikimate. Residue G244 participates in NADP(+) binding.

It belongs to the shikimate dehydrogenase family. In terms of assembly, homodimer.

The catalysed reaction is shikimate + NADP(+) = 3-dehydroshikimate + NADPH + H(+). Its pathway is metabolic intermediate biosynthesis; chorismate biosynthesis; chorismate from D-erythrose 4-phosphate and phosphoenolpyruvate: step 4/7. In terms of biological role, involved in the biosynthesis of the chorismate, which leads to the biosynthesis of aromatic amino acids. Catalyzes the reversible NADPH linked reduction of 3-dehydroshikimate (DHSA) to yield shikimate (SA). This Shewanella baltica (strain OS155 / ATCC BAA-1091) protein is Shikimate dehydrogenase (NADP(+)).